The chain runs to 194 residues: MRFTENFERAKKEALISLEIALRRGEVDEDIIPLLKKINEKPNYFTTSSCSGRISIMEMPDFGDKVNAKWLGKWHREVSLDEVLEAIRKHREGQLWLLVRSPILHVGARTLEDGIKLLNLGVSCGFKYSNIKSISDRKLIVEIRSTERLDALLGENGEILVSDDYMRKLVEIANAQVRRFKRKLKRFEERIEEL.

Belongs to the TYW3 family.

It carries out the reaction 4-demethyl-7-[(3S)-3-amino-3-carboxypropyl]wyosine(37) in tRNA(Phe) + S-adenosyl-L-methionine = 7-[(3S)-3-amino-3-carboxypropyl]wyosine(37) in tRNA(Phe) + S-adenosyl-L-homocysteine + H(+). Its function is as follows. S-adenosyl-L-methionine-dependent methyltransferase that acts as a component of the wyosine derivatives biosynthesis pathway. Probably methylates N-4 position of wybutosine-86 to produce wybutosine-72. This Pyrococcus abyssi (strain GE5 / Orsay) protein is tRNA(Phe) 7-((3-amino-3-carboxypropyl)-4-demethylwyosine(37)-N(4))-methyltransferase 1.